The sequence spans 737 residues: Phosphoribosylformylglycinamidine synthase subunit PurL (737 aa).

Residue histidine 50 is part of the active site. 2 residues coordinate ATP: tyrosine 53 and lysine 92. Position 94 (glutamate 94) interacts with Mg(2+). Substrate-binding positions include 95–98 (SHNH) and arginine 117. Catalysis depends on histidine 96, which acts as the Proton acceptor. Mg(2+) is bound at residue aspartate 118. Glutamine 241 contacts substrate. Mg(2+) is bound at residue aspartate 269. 313-315 (ESQ) is a substrate binding site. 2 residues coordinate ATP: aspartate 494 and glycine 531. Mg(2+) is bound at residue asparagine 532. Residue serine 534 participates in substrate binding.

The protein belongs to the FGAMS family. In terms of assembly, monomer. Part of the FGAM synthase complex composed of 1 PurL, 1 PurQ and 2 PurS subunits.

It is found in the cytoplasm. The enzyme catalyses N(2)-formyl-N(1)-(5-phospho-beta-D-ribosyl)glycinamide + L-glutamine + ATP + H2O = 2-formamido-N(1)-(5-O-phospho-beta-D-ribosyl)acetamidine + L-glutamate + ADP + phosphate + H(+). It functions in the pathway purine metabolism; IMP biosynthesis via de novo pathway; 5-amino-1-(5-phospho-D-ribosyl)imidazole from N(2)-formyl-N(1)-(5-phospho-D-ribosyl)glycinamide: step 1/2. Part of the phosphoribosylformylglycinamidine synthase complex involved in the purines biosynthetic pathway. Catalyzes the ATP-dependent conversion of formylglycinamide ribonucleotide (FGAR) and glutamine to yield formylglycinamidine ribonucleotide (FGAM) and glutamate. The FGAM synthase complex is composed of three subunits. PurQ produces an ammonia molecule by converting glutamine to glutamate. PurL transfers the ammonia molecule to FGAR to form FGAM in an ATP-dependent manner. PurS interacts with PurQ and PurL and is thought to assist in the transfer of the ammonia molecule from PurQ to PurL. The chain is Phosphoribosylformylglycinamidine synthase subunit PurL from Nitrobacter winogradskyi (strain ATCC 25391 / DSM 10237 / CIP 104748 / NCIMB 11846 / Nb-255).